The following is a 153-amino-acid chain: Endoribonuclease YbeY (153 aa).

Residues His119, His123, and His129 each contribute to the Zn(2+) site.

It belongs to the endoribonuclease YbeY family. Requires Zn(2+) as cofactor.

Its subcellular location is the cytoplasm. Its function is as follows. Single strand-specific metallo-endoribonuclease involved in late-stage 70S ribosome quality control and in maturation of the 3' terminus of the 16S rRNA. In Desulforamulus reducens (strain ATCC BAA-1160 / DSM 100696 / MI-1) (Desulfotomaculum reducens), this protein is Endoribonuclease YbeY.